The chain runs to 238 residues: Uridylate kinase (238 aa).

Residue 12-15 (KLSG) participates in ATP binding. Residue G54 coordinates UMP. ATP contacts are provided by G55 and R59. UMP is bound by residues D74 and 135–142 (VGAPYFTT). The ATP site is built by T162, Y168, and D171.

This sequence belongs to the UMP kinase family. As to quaternary structure, homohexamer.

It localises to the cytoplasm. The catalysed reaction is UMP + ATP = UDP + ADP. It functions in the pathway pyrimidine metabolism; CTP biosynthesis via de novo pathway; UDP from UMP (UMPK route): step 1/1. Its activity is regulated as follows. Inhibited by UTP. Catalyzes the reversible phosphorylation of UMP to UDP. The sequence is that of Uridylate kinase from Erythrobacter litoralis (strain HTCC2594).